A 201-amino-acid polypeptide reads, in one-letter code: DeSI-like protein sdu1 (201 aa).

One can recognise a PPPDE domain in the interval 1–143 (MKVYINVYDL…AFPTITNALL (143 aa)). Active-site residues include H29 and C105. The tract at residues 146–201 (GQKNTSDVDDSSDSSSDVDEETLIVSKSKKAHKDIPKFSAPPPSADLNNLITDSLP) is disordered. Residues 152–167 (DVDDSSDSSSDVDEET) are compositionally biased toward acidic residues. The segment covering 191–201 (DLNNLITDSLP) has biased composition (polar residues).

The protein belongs to the DeSI family.

It is found in the cytoplasm. Has a role in meiosis. The chain is DeSI-like protein sdu1 (sdu1) from Schizosaccharomyces pombe (strain 972 / ATCC 24843) (Fission yeast).